Reading from the N-terminus, the 381-residue chain is Sharpin (381 aa).

A self-association region spans residues 1-177 (MSPPAGGAAA…KKEELATHLA (177 aa)). Residues 121-131 (EGQNGNDSTAP) show a composition bias toward polar residues. The disordered stretch occupies residues 121–153 (EGQNGNDSTAPVPTPAMCPTSPPCSSVTPTPKA). Pro residues predominate over residues 132–142 (VPTPAMCPTSP). Residues 172 to 305 (LATHLAQAIA…LLSAPREVSG (134 aa)) are interaction with SHANK1. One can recognise a Ubiquitin-like domain in the interval 216-285 (IRLQVTVEDA…PERSLASYGV (70 aa)). Position 307 is a phosphoserine (S307). A RanBP2-type zinc finger spans residues 342-371 (PQPGWSCPSCTFINASNRPGCEMCSTQRPC).

In terms of assembly, monomer and homodimer. Component of the LUBAC complex (linear ubiquitin chain assembly complex) which consists of SHARPIN, RBCK1 and RNF31. LUBAC has a MW of approximately 600 kDa suggesting a heteromultimeric assembly of its subunits. Associates with the TNF-R1 signaling complex (TNF-RSC) in a stimulation-dependent manner. Interacts with EYA1, EYA2, SHANK1 and SHANK3 (via ANK repeats). Expressed in brain, spleen, lung, heart, skeletal muscle, kidney and testis (at protein level). Expressed in heart and testis.

The protein localises to the cytoplasm. It localises to the synapse. The protein operates within protein modification; protein ubiquitination. In terms of biological role, component of the LUBAC complex which conjugates linear polyubiquitin chains in a head-to-tail manner to substrates and plays a key role in NF-kappa-B activation and regulation of inflammation. LUBAC conjugates linear polyubiquitin to IKBKG and RIPK1 and is involved in activation of the canonical NF-kappa-B and the JNK signaling pathways. Linear ubiquitination mediated by the LUBAC complex interferes with TNF-induced cell death and thereby prevents inflammation. LUBAC is recruited to the TNF-R1 signaling complex (TNF-RSC) following polyubiquitination of TNF-RSC components by BIRC2 and/or BIRC3 and to conjugate linear polyubiquitin to IKBKG and possibly other components contributing to the stability of the complex. The LUBAC complex is also involved in innate immunity by conjugating linear polyubiquitin chains at the surface of bacteria invading the cytosol to form the ubiquitin coat surrounding bacteria. LUBAC is not able to initiate formation of the bacterial ubiquitin coat, and can only promote formation of linear polyubiquitins on pre-existing ubiquitin. The bacterial ubiquitin coat acts as an 'eat-me' signal for xenophagy and promotes NF-kappa-B activation. Together with OTULIN, the LUBAC complex regulates the canonical Wnt signaling during angiogenesis. This Rattus norvegicus (Rat) protein is Sharpin (Sharpin).